Reading from the N-terminus, the 97-residue chain is Protein YcgL (97 aa).

The 85-residue stretch at 1–85 folds into the YcgL domain; that stretch reads MLCVIYRSSK…PPEDLLKQHL (85 aa).

The sequence is that of Protein YcgL from Escherichia fergusonii (strain ATCC 35469 / DSM 13698 / CCUG 18766 / IAM 14443 / JCM 21226 / LMG 7866 / NBRC 102419 / NCTC 12128 / CDC 0568-73).